Reading from the N-terminus, the 369-residue chain is tRNA/tmRNA (uracil-C(5))-methyltransferase (369 aa).

S-adenosyl-L-methionine-binding residues include Gln-190, Tyr-218, Asn-223, Glu-239, and Asp-301. Cys-326 (nucleophile) is an active-site residue. Catalysis depends on Glu-360, which acts as the Proton acceptor.

Belongs to the class I-like SAM-binding methyltransferase superfamily. RNA M5U methyltransferase family. TrmA subfamily.

The enzyme catalyses uridine(54) in tRNA + S-adenosyl-L-methionine = 5-methyluridine(54) in tRNA + S-adenosyl-L-homocysteine + H(+). It catalyses the reaction uridine(341) in tmRNA + S-adenosyl-L-methionine = 5-methyluridine(341) in tmRNA + S-adenosyl-L-homocysteine + H(+). In terms of biological role, dual-specificity methyltransferase that catalyzes the formation of 5-methyluridine at position 54 (m5U54) in all tRNAs, and that of position 341 (m5U341) in tmRNA (transfer-mRNA). This chain is tRNA/tmRNA (uracil-C(5))-methyltransferase, found in Vibrio vulnificus (strain YJ016).